The sequence spans 297 residues: Tyrosine recombinase XerC (297 aa).

In terms of domain architecture, Core-binding (CB) spans 1 to 83 (MAILDEFDEH…AVKAFTAWAK (83 aa)). The Tyr recombinase domain maps to 104 to 291 (TLPAVLRQDQ…AVSRLRVVHD (188 aa)). Active-site residues include Arg-148, Lys-172, His-243, Arg-246, and His-269. Tyr-278 (O-(3'-phospho-DNA)-tyrosine intermediate) is an active-site residue.

The protein belongs to the 'phage' integrase family. XerC subfamily. Forms a cyclic heterotetrameric complex composed of two molecules of XerC and two molecules of XerD.

The protein resides in the cytoplasm. Functionally, site-specific tyrosine recombinase, which acts by catalyzing the cutting and rejoining of the recombining DNA molecules. The XerC-XerD complex is essential to convert dimers of the bacterial chromosome into monomers to permit their segregation at cell division. It also contributes to the segregational stability of plasmids. This Mycobacterium leprae (strain TN) protein is Tyrosine recombinase XerC.